The primary structure comprises 66 residues: Period circadian protein (66 aa).

The segment at 1 to 66 (EGSGGSGSSG…VTLTESLLNK (66 aa)) is disordered. A compositionally biased stretch (low complexity) spans 9–31 (SGNFTTGSNIHMSSVTNTSNAGT). Tandem repeats lie at residues 30–31 (GT), 32–33 (GT), 35–36 (GT), and 37–38 (GN). The tract at residues 30–53 (GTGTSGTGNSGGGSGGGTGPGSGA) is 4 X 2 AA tandem repeats of G-[TN]. The segment covering 32-51 (GTSGTGNSGGGSGGGTGPGS) has biased composition (gly residues).

As to quaternary structure, forms a heterodimer with timeless (TIM); the complex then translocates into the nucleus. Phosphorylated with a circadian rhythmicity, probably by the double-time protein (dbt). Phosphorylation could be implicated in the stability of per monomer and in the formation of heterodimer per-tim.

Its subcellular location is the nucleus. It localises to the cytoplasm. The protein resides in the perinuclear region. Functionally, essential for biological clock functions. Determines the period length of circadian and ultradian rhythms; an increase in PER dosage leads to shortened circadian rhythms and a decrease leads to lengthened circadian rhythms. Essential for the circadian rhythmicity of locomotor activity, eclosion behavior, and for the rhythmic component of the male courtship song that originates in the thoracic nervous system. The biological cycle depends on the rhythmic formation and nuclear localization of the TIM-PER complex. Light induces the degradation of TIM, which promotes elimination of PER. Nuclear activity of the heterodimer coordinatively regulates PER and TIM transcription through a negative feedback loop. Behaves as a negative element in circadian transcriptional loop. Does not appear to bind DNA, suggesting indirect transcriptional inhibition. This Drosophila saltans (Fruit fly) protein is Period circadian protein (per).